The sequence spans 195 residues: Fe/S biogenesis protein NfuA (195 aa).

[4Fe-4S] cluster-binding residues include Cys-152 and Cys-155.

Belongs to the NfuA family. In terms of assembly, homodimer. It depends on [4Fe-4S] cluster as a cofactor.

Involved in iron-sulfur cluster biogenesis. Binds a 4Fe-4S cluster, can transfer this cluster to apoproteins, and thereby intervenes in the maturation of Fe/S proteins. Could also act as a scaffold/chaperone for damaged Fe/S proteins. In Vibrio cholerae serotype O1 (strain ATCC 39541 / Classical Ogawa 395 / O395), this protein is Fe/S biogenesis protein NfuA.